A 98-amino-acid chain; its full sequence is Growth-regulated protein homolog gamma (98 aa).

An N-terminal signal peptide occupies residues 1-29 (MAPAASSAPRLLRAAMLLLLLVAAGRRAA). 2 disulfides stabilise this stretch: Cys-39-Cys-65 and Cys-41-Cys-81.

This sequence belongs to the intercrine alpha (chemokine CxC) family.

Its subcellular location is the secreted. This chain is Growth-regulated protein homolog gamma, found in Bos taurus (Bovine).